A 343-amino-acid chain; its full sequence is Phosphoribosylformylglycinamidine cyclo-ligase (343 aa).

Belongs to the AIR synthase family.

The protein localises to the cytoplasm. It catalyses the reaction 2-formamido-N(1)-(5-O-phospho-beta-D-ribosyl)acetamidine + ATP = 5-amino-1-(5-phospho-beta-D-ribosyl)imidazole + ADP + phosphate + H(+). The protein operates within purine metabolism; IMP biosynthesis via de novo pathway; 5-amino-1-(5-phospho-D-ribosyl)imidazole from N(2)-formyl-N(1)-(5-phospho-D-ribosyl)glycinamide: step 2/2. The chain is Phosphoribosylformylglycinamidine cyclo-ligase from Enterococcus faecalis (strain ATCC 700802 / V583).